The chain runs to 238 residues: Ribonuclease PH (238 aa).

Residues arginine 86 and 124 to 126 each bind phosphate; that span reads GTR.

This sequence belongs to the RNase PH family. Homohexameric ring arranged as a trimer of dimers.

The catalysed reaction is tRNA(n+1) + phosphate = tRNA(n) + a ribonucleoside 5'-diphosphate. Functionally, phosphorolytic 3'-5' exoribonuclease that plays an important role in tRNA 3'-end maturation. Removes nucleotide residues following the 3'-CCA terminus of tRNAs; can also add nucleotides to the ends of RNA molecules by using nucleoside diphosphates as substrates, but this may not be physiologically important. Probably plays a role in initiation of 16S rRNA degradation (leading to ribosome degradation) during starvation. This chain is Ribonuclease PH, found in Haemophilus influenzae (strain 86-028NP).